We begin with the raw amino-acid sequence, 79 residues long: RNA-binding protein Hfq (79 aa).

The 61-residue stretch at 10-70 (DVFLNTVRKQ…ISTIMPGQPV (61 aa)) folds into the Sm domain.

Belongs to the Hfq family. In terms of assembly, homohexamer.

Its function is as follows. RNA chaperone that binds small regulatory RNA (sRNAs) and mRNAs to facilitate mRNA translational regulation in response to envelope stress, environmental stress and changes in metabolite concentrations. Also binds with high specificity to tRNAs. In Bartonella quintana (strain Toulouse) (Rochalimaea quintana), this protein is RNA-binding protein Hfq.